We begin with the raw amino-acid sequence, 627 residues long: MNERADRSGGAAPGGDRTHRVPVLVVGGSLVGLSTSVFLGRLGVRHTLVERHAGTSIHPRGRGNNVRTMEIFRVAGTEPDIRRAAATLADNHGILQAPTLAGDAGEWLFKQIDPGGGLARFSPSSWCLCSQNDLEPELLTHATNLGGDLRFGTELLSFEADTEGVTAIVKSRETGEHTTIRADYLVAADGPRSPVREQLGIGQSGPGDLFHNVSITFRSRRLADVVGDRRFIVCYLTDENADGALLPVDNRENWVFHAPWHPEQGETVEDFTDERCAAHIRRAIGDPDLDVEITGKAPWHAAQRVARSYRSGRVLLAGDSAHEMSPTGAFGSNTGIQDAHNLAWKLAAVLEGWAGEALLDTYDTERRPVAEATSARAAHRSVEHSHPGFAPPPVAGGGGPGAGTPGGAGRGTGGPGGPGGPGGLGGPGGPGGTGGPGGPGGPGGPDGPRGAGGAPGGGPGGGPGGGGPQRGILNVALGYRYPRGAVVGADPATPVVPEGLDLTGAPGSRAPHLWVRRGQDRLSTLDLYEDSLVLLSDAAQPTGWHEAAAGVAAGMRVPLKSYRVGGSPGADLNPDDEETDWARAHGVTRGGAVLVRPDGFVAWRSPGPAPDPESMLRQVVGTVLARS.

Residues 22–51 and 309–319 each bind FAD; these read PVLVVGGSLVGLSTSVFLGRLGVRHTLVER and YRSGRVLLAGD. Residues 370–469 form a disordered region; sequence AEATSARAAH…GGGPGGGGPQ (100 aa). The span at 395 to 469 shows a compositional bias: gly residues; the sequence is AGGGGPGAGT…GGGPGGGGPQ (75 aa).

Belongs to the PheA/TfdB FAD monooxygenase family. FAD serves as cofactor.

Its function is as follows. Involved in developmentally regulated synthesis of a compound biosynthetically related to polyketide antibiotics which is essential for spore color in Streptococcus coelicolor. This chain is Putative polyketide hydroxylase, found in Streptomyces coelicolor (strain ATCC BAA-471 / A3(2) / M145).